A 177-amino-acid chain; its full sequence is Large ribosomal subunit protein uL6 (177 aa).

The protein belongs to the universal ribosomal protein uL6 family. In terms of assembly, part of the 50S ribosomal subunit.

Its function is as follows. This protein binds to the 23S rRNA, and is important in its secondary structure. It is located near the subunit interface in the base of the L7/L12 stalk, and near the tRNA binding site of the peptidyltransferase center. The chain is Large ribosomal subunit protein uL6 from Chromobacterium violaceum (strain ATCC 12472 / DSM 30191 / JCM 1249 / CCUG 213 / NBRC 12614 / NCIMB 9131 / NCTC 9757 / MK).